Consider the following 189-residue polypeptide: MGVHSDDWIRQMVKKHRMIEPFEESQVRKKVDGSQVISFGLSSYGYDLRVSREFKIFTNVFNSVVDPKAFDPRSFVEMESDCCIIPPNSFALARSVEYFRIPRDVITICLGKSTYARCGIIVNVTPFEPEWEGYATLEISNTTPLPAKVYAEEGLAQVIFIQASEPCSISYAERNGKYMYQKGVTVPRL.

DCTP contacts are provided by residues Lys112 to Arg117, Thr136 to Glu138, Gln157, Tyr171, and Gln181. Glu138 serves as the catalytic Proton donor/acceptor.

The protein belongs to the dCTP deaminase family. As to quaternary structure, homotrimer.

It catalyses the reaction dCTP + H2O + H(+) = dUTP + NH4(+). The protein operates within pyrimidine metabolism; dUMP biosynthesis; dUMP from dCTP (dUTP route): step 1/2. Functionally, catalyzes the deamination of dCTP to dUTP. In Methylacidiphilum infernorum (isolate V4) (Methylokorus infernorum (strain V4)), this protein is dCTP deaminase.